A 475-amino-acid chain; its full sequence is BICD family-like cargo adapter 2 (475 aa).

The stretch at 56-275 (ELGKALLERN…LKELQDELHM (220 aa)) forms a coiled coil. 2 stretches are compositionally biased toward polar residues: residues 286–300 (HSSLHSEIQQSTAVQ) and 308–318 (SAETQSITSGY). The disordered stretch occupies residues 286-318 (HSSLHSEIQQSTAVQNHEKGRNSAETQSITSGY). Residues 340-413 (RLQDQVTMQH…ESLNLQLLST (74 aa)) adopt a coiled-coil conformation. Positions 440-450 (QSQKQQETQKP) are enriched in low complexity. The disordered stretch occupies residues 440–459 (QSQKQQETQKPPESPQNSFL).

This sequence belongs to the BICDR family.

The protein is BICD family-like cargo adapter 2 (bicdl2) of Xenopus tropicalis (Western clawed frog).